Reading from the N-terminus, the 403-residue chain is S-adenosylmethionine synthase (403 aa).

ATP is bound at residue 140-145; the sequence is GKGSTD.

Belongs to the AdoMet synthase 2 family. The cofactor is Mg(2+).

It catalyses the reaction L-methionine + ATP + H2O = S-adenosyl-L-methionine + phosphate + diphosphate. It participates in amino-acid biosynthesis; S-adenosyl-L-methionine biosynthesis; S-adenosyl-L-methionine from L-methionine: step 1/1. Functionally, catalyzes the formation of S-adenosylmethionine from methionine and ATP. This chain is S-adenosylmethionine synthase, found in Sulfolobus acidocaldarius (strain ATCC 33909 / DSM 639 / JCM 8929 / NBRC 15157 / NCIMB 11770).